A 1777-amino-acid chain; its full sequence is FERM and PDZ domain-containing protein 3 (1777 aa).

The 78-residue stretch at 21–98 (QVTVHRDPIY…FIVLTVLHTH (78 aa)) folds into the PDZ domain. Residues 147–461 (NVLKVFLENG…GYCRLLLDSR (315 aa)) form the FERM domain. Disordered regions lie at residues 491–520 (TGGH…TPPP), 555–574 (ETRP…QGYE), 622–697 (QLGP…GRHL), 832–871 (SLGR…QGER), 1014–1216 (SAPE…PFRL), 1309–1346 (RPQA…LSSP), and 1732–1765 (QQQQ…ATVM). A compositionally biased stretch (polar residues) spans 502–511 (YVGSVGTSPR). Residues 555–564 (ETRPRTKSDP) show a composition bias toward basic and acidic residues. Residues 649-659 (SEEEEEEEDET) show a composition bias toward acidic residues. 4 stretches are compositionally biased toward polar residues: residues 840–850 (PSLQPIATGQS), 1015–1035 (APET…SSPR), 1046–1056 (HLSQQEDSLPV), and 1094–1111 (LQKQ…QLES). Positions 1134–1168 (QSPSCQSRSHSPSCQPHGHSPSSQSRGQSPSCQPR) are enriched in low complexity. Over residues 1172 to 1202 (PLRSQAASRQVSTMPSRKLETTLNGAHSTSE) the composition is skewed to polar residues. Positions 1732–1751 (QQQQQQQQQQQQVAAAAGAA) are enriched in low complexity.

This is FERM and PDZ domain-containing protein 3 from Homo sapiens (Human).